A 666-amino-acid polypeptide reads, in one-letter code: Adenylylsulfate reductase subunit alpha (666 aa).

FAD is bound by residues 32-35 (GGMG), 60-61 (DK), 67-69 (SGA), Asn78, Ile193, Ser259, Ser417, 461-462 (AD), and Ser472.

This sequence belongs to the FAD-dependent oxidoreductase 2 family. As to quaternary structure, heterodimer composed of AprA and AprB. The heterodimers can dimerize to form heterotetramers. FAD is required as a cofactor.

It localises to the cytoplasm. It carries out the reaction sulfite + A + AMP + 2 H(+) = adenosine 5'-phosphosulfate + AH2. In terms of biological role, catalytic subunit of the adenylylsulfate reductase which catalyzes reversibly the reduction of adenosine 5'-phosphosulfate (APS) to sulfite and AMP during dissimilatory sulfate reduction. The protein is Adenylylsulfate reductase subunit alpha of Megalodesulfovibrio gigas (strain ATCC 19364 / DSM 1382 / NCIMB 9332 / VKM B-1759) (Desulfovibrio gigas).